Consider the following 118-residue polypeptide: V-type proton ATPase subunit G 2 (118 aa).

A disordered region spans residues 23–90 (ADARKRKARR…VQGMQSSQQR (68 aa)). Positions 35-55 (QAKEEAQMEVEQYRREREQEF) are enriched in basic and acidic residues. 2 stretches are compositionally biased toward polar residues: residues 56 to 69 (QSKQ…QGNL) and 78 to 89 (RRQVQGMQSSQQ).

This sequence belongs to the V-ATPase G subunit family. As to quaternary structure, V-ATPase is a heteromultimeric enzyme made up of two complexes: the ATP-hydrolytic V1 complex and the proton translocation V0 complex. The V1 complex consists of three catalytic AB heterodimers that form a heterohexamer, three peripheral stalks each consisting of EG heterodimers, one central rotor including subunits D and F, and the regulatory subunits C and H. The proton translocation complex V0 consists of the proton transport subunit a, a ring of proteolipid subunits c9c'', rotary subunit d, subunits e and f, and the accessory subunits ATP6AP1/Ac45 and ATP6AP2/PRR.

It localises to the melanosome. The protein resides in the cytoplasmic vesicle. It is found in the clathrin-coated vesicle membrane. Its function is as follows. Subunit of the V1 complex of vacuolar(H+)-ATPase (V-ATPase), a multisubunit enzyme composed of a peripheral complex (V1) that hydrolyzes ATP and a membrane integral complex (V0) that translocates protons. V-ATPase is responsible for acidifying and maintaining the pH of intracellular compartments and in some cell types, is targeted to the plasma membrane, where it is responsible for acidifying the extracellular environment. The protein is V-type proton ATPase subunit G 2 (ATP6V1G2) of Macaca mulatta (Rhesus macaque).